We begin with the raw amino-acid sequence, 486 residues long: Ribulose bisphosphate carboxylase large chain (486 aa).

2 residues coordinate substrate: Asn-126 and Thr-176. Catalysis depends on Lys-178, which acts as the Proton acceptor. Lys-180 contributes to the substrate binding site. Mg(2+) is bound by residues Lys-204, Asp-206, and Glu-207. N6-carboxylysine is present on Lys-204. His-296 functions as the Proton acceptor in the catalytic mechanism. Substrate contacts are provided by Arg-297, His-329, and Ser-381.

It belongs to the RuBisCO large chain family. Type I subfamily. Heterohexadecamer of 8 large chains and 8 small chains. The cofactor is Mg(2+).

The enzyme catalyses 2 (2R)-3-phosphoglycerate + 2 H(+) = D-ribulose 1,5-bisphosphate + CO2 + H2O. It catalyses the reaction D-ribulose 1,5-bisphosphate + O2 = 2-phosphoglycolate + (2R)-3-phosphoglycerate + 2 H(+). Functionally, ruBisCO catalyzes two reactions: the carboxylation of D-ribulose 1,5-bisphosphate, the primary event in carbon dioxide fixation, as well as the oxidative fragmentation of the pentose substrate. Both reactions occur simultaneously and in competition at the same active site. The chain is Ribulose bisphosphate carboxylase large chain from Cupriavidus taiwanensis (strain DSM 17343 / BCRC 17206 / CCUG 44338 / CIP 107171 / LMG 19424 / R1) (Ralstonia taiwanensis (strain LMG 19424)).